The sequence spans 364 residues: Aminomethyltransferase (364 aa).

The protein belongs to the GcvT family. The glycine cleavage system is composed of four proteins: P, T, L and H.

The enzyme catalyses N(6)-[(R)-S(8)-aminomethyldihydrolipoyl]-L-lysyl-[protein] + (6S)-5,6,7,8-tetrahydrofolate = N(6)-[(R)-dihydrolipoyl]-L-lysyl-[protein] + (6R)-5,10-methylene-5,6,7,8-tetrahydrofolate + NH4(+). Functionally, the glycine cleavage system catalyzes the degradation of glycine. This is Aminomethyltransferase from Thermotoga sp. (strain RQ2).